Reading from the N-terminus, the 175-residue chain is UPF0398 protein SPP_0409 (175 aa).

Belongs to the UPF0398 family.

This Streptococcus pneumoniae (strain P1031) protein is UPF0398 protein SPP_0409.